The chain runs to 403 residues: Tyrosine--tRNA ligase (403 aa).

The short motif at P42 to H51 is the 'HIGH' region element. The 'KMSKS' region motif lies at K226–S230. K229 contacts ATP. The S4 RNA-binding domain occupies L339–L400.

Belongs to the class-I aminoacyl-tRNA synthetase family. TyrS type 2 subfamily. As to quaternary structure, homodimer.

Its subcellular location is the cytoplasm. The catalysed reaction is tRNA(Tyr) + L-tyrosine + ATP = L-tyrosyl-tRNA(Tyr) + AMP + diphosphate + H(+). Functionally, catalyzes the attachment of tyrosine to tRNA(Tyr) in a two-step reaction: tyrosine is first activated by ATP to form Tyr-AMP and then transferred to the acceptor end of tRNA(Tyr). The sequence is that of Tyrosine--tRNA ligase from Xanthomonas euvesicatoria pv. vesicatoria (strain 85-10) (Xanthomonas campestris pv. vesicatoria).